A 374-amino-acid polypeptide reads, in one-letter code: Copper-containing nitrite reductase (374 aa).

Residues 1 to 31 (MFTRRAALVGAAALASAPLVIRTAGAEEAPA) constitute a signal peptide (tat-type signal). Plastocyanin-like domains lie at 93–189 (MTFD…IMVL) and 254–355 (GAVG…VLVE). Positions 126, 131, 166, 167, 177, 182, and 338 each coordinate Cu cation.

This sequence belongs to the multicopper oxidase family. In terms of assembly, homotrimer. Cu(2+) is required as a cofactor. Cu(+) serves as cofactor. It depends on FAD as a cofactor. In terms of processing, predicted to be exported by the Tat system. The position of the signal peptide cleavage has not been experimentally proven.

The protein localises to the periplasm. The enzyme catalyses nitric oxide + Fe(III)-[cytochrome c] + H2O = Fe(II)-[cytochrome c] + nitrite + 2 H(+). The protein operates within nitrogen metabolism; nitrate reduction (denitrification); dinitrogen from nitrate: step 2/4. The sequence is that of Copper-containing nitrite reductase (nirK) from Cereibacter sphaeroides (strain ATCC 17025 / ATH 2.4.3) (Rhodobacter sphaeroides).